A 122-amino-acid polypeptide reads, in one-letter code: UPF0231 protein VP2494 (122 aa).

Belongs to the UPF0231 family.

The polypeptide is UPF0231 protein VP2494 (Vibrio parahaemolyticus serotype O3:K6 (strain RIMD 2210633)).